A 320-amino-acid chain; its full sequence is Apolipoprotein E (320 aa).

Positions methionine 1 to glycine 18 are cleaved as a signal peptide. 8 consecutive repeat copies span residues alanine 82–serine 103, proline 104–glycine 125, alanine 126–glycine 147, glutamine 148–leucine 169, arginine 170–glutamate 191, arginine 192–alanine 213, threonine 214–arginine 236, and alanine 237–glutamate 258. Residues alanine 82–glutamate 258 form an 8 X 22 AA approximate tandem repeats region. A Methionine sulfoxide modification is found at methionine 145. Residue serine 149 is modified to Phosphoserine. The interval histidine 160–arginine 170 is LDL and other lipoprotein receptors binding. Leucine 164–arginine 167 is a binding site for heparin. The tract at residues alanine 212–methionine 293 is lipid-binding and lipoprotein association. Residue glycine 232–methionine 239 coordinates heparin. A homooligomerization region spans residues glutamine 269–histidine 320. Residues arginine 281–methionine 293 are specificity for association with VLDL.

It belongs to the apolipoprotein A1/A4/E family. In terms of assembly, homotetramer. May interact with ABCA1; functionally associated with ABCA1 in the biogenesis of HDLs. May interact with APP/A4 amyloid-beta peptide; the interaction is extremely stable in vitro but its physiological significance is unclear. May interact with MAPT. May interact with MAP2. In the cerebrospinal fluid, interacts with secreted SORL1. Interacts with PMEL; this allows the loading of PMEL luminal fragment on ILVs to induce fibril nucleation. APOE exists as multiple glycosylated and sialylated glycoforms within cells and in plasma. The extent of glycosylation and sialylation are tissue and context specific. Post-translationally, glycated in plasma VLDL. In terms of processing, phosphorylated by FAM20C in the extracellular medium.

It localises to the secreted. The protein localises to the extracellular space. The protein resides in the extracellular matrix. It is found in the extracellular vesicle. Its subcellular location is the endosome. It localises to the multivesicular body. Its function is as follows. APOE is an apolipoprotein, a protein associating with lipid particles, that mainly functions in lipoprotein-mediated lipid transport between organs via the plasma and interstitial fluids. APOE is a core component of plasma lipoproteins and is involved in their production, conversion and clearance. Apolipoproteins are amphipathic molecules that interact both with lipids of the lipoprotein particle core and the aqueous environment of the plasma. As such, APOE associates with chylomicrons, chylomicron remnants, very low density lipoproteins (VLDL) and intermediate density lipoproteins (IDL) but shows a preferential binding to high-density lipoproteins (HDL). It also binds a wide range of cellular receptors including the LDL receptor/LDLR, the LDL receptor-related proteins LRP1, LRP2 and LRP8 and the very low-density lipoprotein receptor/VLDLR that mediate the cellular uptake of the APOE-containing lipoprotein particles. Finally, APOE also has a heparin-binding activity and binds heparan-sulfate proteoglycans on the surface of cells, a property that supports the capture and the receptor-mediated uptake of APOE-containing lipoproteins by cells. A main function of APOE is to mediate lipoprotein clearance through the uptake of chylomicrons, VLDLs, and HDLs by hepatocytes. APOE is also involved in the biosynthesis by the liver of VLDLs as well as their uptake by peripheral tissues ensuring the delivery of triglycerides and energy storage in muscle, heart and adipose tissues. By participating in the lipoprotein-mediated distribution of lipids among tissues, APOE plays a critical role in plasma and tissues lipid homeostasis. APOE is also involved in two steps of reverse cholesterol transport, the HDLs-mediated transport of cholesterol from peripheral tissues to the liver, and thereby plays an important role in cholesterol homeostasis. First, it is functionally associated with ABCA1 in the biogenesis of HDLs in tissues. Second, it is enriched in circulating HDLs and mediates their uptake by hepatocytes. APOE also plays an important role in lipid transport in the central nervous system, regulating neuron survival and sprouting. The sequence is that of Apolipoprotein E (APOE) from Plecturocebus moloch (Dusky titi monkey).